A 335-amino-acid polypeptide reads, in one-letter code: Adenosine deaminase (335 aa).

Positions 12 and 14 each coordinate Zn(2+). Substrate is bound by residues His14 and Asp16. Position 197 (His197) interacts with Zn(2+). Glu200 (proton donor) is an active-site residue. Asp278 provides a ligand contact to Zn(2+).

This sequence belongs to the metallo-dependent hydrolases superfamily. Adenosine and AMP deaminases family. Adenosine deaminase subfamily. The cofactor is Zn(2+).

It carries out the reaction adenosine + H2O + H(+) = inosine + NH4(+). The enzyme catalyses 2'-deoxyadenosine + H2O + H(+) = 2'-deoxyinosine + NH4(+). Its function is as follows. Catalyzes the hydrolytic deamination of adenosine and 2-deoxyadenosine. In Clostridium botulinum (strain Okra / Type B1), this protein is Adenosine deaminase.